A 420-amino-acid chain; its full sequence is MLPGLRRLLQGPASACLLLTLLALPSVTPSCPMLCTCYSSPPTVSCQANNFSSVPLSLPPSTQRLFLQNNLIRSLRPGTFGPNLLTLWLFSNNLSTIHPGTFRHLQALEELDLGDNRHLRSLEPDTFQGLERLQSLHLYRCQLSSLPGNIFRGLVSLQYLYLQENSLLHLQDDLFADLANLSHLFLHGNRLRLLTEHVFRGLGSLDRLLLHGNRLQGVHRAAFHGLSRLTILYLFNNSLASLPGEALADLPALEFLRLNANPWACDCRARPLWAWFQRARVSSSDVTCATPPERQGRDLRALRDSDFQACPPPTPTRPGSRARGNSSSNHLYGVAEAGAPPADPSTLYRDLPAEDSRGRQGGDAPTEDDYWGGYGGEDQRGEQTCPGAACQAPADSRGPALSAGLRTPLLCLLPLALHHL.

Residues 1–30 (MLPGLRRLLQGPASACLLLTLLALPSVTPS) form the signal peptide. Disulfide bonds link Cys31–Cys37 and Cys35–Cys46. One can recognise an LRRNT domain in the interval 31 to 60 (CPMLCTCYSSPPTVSCQANNFSSVPLSLPP). An N-linked (GlcNAc...) asparagine glycan is attached at Asn50. LRR repeat units follow at residues 61–82 (STQR…TFGP), 83–104 (NLLT…TFRH), 107–129 (ALEE…TFQG), 132–153 (RLQS…IFRG), 156–177 (SLQY…LFAD), 180–201 (NLSH…VFRG), 204–225 (SLDR…AFHG), and 228–249 (RLTI…ALAD). Asn93 carries N-linked (GlcNAc...) asparagine glycosylation. A glycan (N-linked (GlcNAc...) asparagine) is linked at Asn236. Residues 261-312 (NPWACDCRARPLWAWFQRARVSSSDVTCATPPERQGRDLRALRDSDFQACPP) enclose the LRRCT domain. Disulfide bonds link Cys265/Cys288 and Cys267/Cys310. The tract at residues 286–399 (VTCATPPERQ…CQAPADSRGP (114 aa)) is disordered. Residues 294 to 306 (RQGRDLRALRDSD) show a composition bias toward basic and acidic residues. The interval 315–327 (PTRPGSRARGNSS) is important for interaction with MAG. Positions 351–360 (LPAEDSRGRQ) are enriched in basic and acidic residues. Gly398 carries GPI-anchor amidated glycine lipidation. A propeptide spans 399-420 (PALSAGLRTPLLCLLPLALHHL) (removed in mature form).

It belongs to the Nogo receptor family. In terms of assembly, interaction with MAG is controversial, and may be indirect. Interacts with MAG. Does not interact with OMG and RTN4. In terms of processing, undergoes zinc metalloproteinase-mediated ectodomain shedding in neuroblastoma cells; is released both as a full-length ectodomain and an N-terminal fragment containing the leucine-rich repeat (LRR) region of the protein. Post-translationally, N-glycosylated. In terms of tissue distribution, detected in brain. Detected in hippocampus neurons (at protein level).

Its subcellular location is the cell membrane. The protein resides in the membrane raft. It localises to the cell projection. The protein localises to the dendrite. It is found in the axon. Its subcellular location is the perikaryon. Functionally, cell surface receptor that plays a functionally redundant role in the inhibition of neurite outgrowth mediated by MAG. Plays a functionally redundant role in postnatal brain development. Contributes to normal axon migration across the brain midline and normal formation of the corpus callosum. Does not seem to play a significant role in regulating axon regeneration in the adult central nervous system. Protects motoneurons against apoptosis; protection against apoptosis is probably mediated by MAG. Like other family members, plays a role in restricting the number dendritic spines and the number of synapses that are formed during brain development. Signaling mediates activation of Rho and downstream reorganization of the actin cytoskeleton. This chain is Reticulon-4 receptor-like 2, found in Mus musculus (Mouse).